We begin with the raw amino-acid sequence, 123 residues long: Chaperone protein SycN (123 aa).

In terms of assembly, interacts with YscB to form a complex which specifically binds to YopN.

Its subcellular location is the cytoplasm. It is found in the cell inner membrane. Functions as a specific chaperone for YopN. It could facilitate the secretion and the subsequent translocation of YopN. In Yersinia pseudotuberculosis serotype I (strain IP32953), this protein is Chaperone protein SycN (sycN).